The sequence spans 294 residues: Acetylglutamate kinase (294 aa).

Substrate is bound by residues Gly-66–Gly-67, Arg-88, and Asn-193.

It belongs to the acetylglutamate kinase family. ArgB subfamily.

Its subcellular location is the cytoplasm. It carries out the reaction N-acetyl-L-glutamate + ATP = N-acetyl-L-glutamyl 5-phosphate + ADP. It functions in the pathway amino-acid biosynthesis; L-arginine biosynthesis; N(2)-acetyl-L-ornithine from L-glutamate: step 2/4. Functionally, catalyzes the ATP-dependent phosphorylation of N-acetyl-L-glutamate. The sequence is that of Acetylglutamate kinase from Agrobacterium fabrum (strain C58 / ATCC 33970) (Agrobacterium tumefaciens (strain C58)).